The chain runs to 209 residues: Octanoyltransferase (209 aa).

Residues 30 to 209 (DHKPEIIYLV…IQTEFNKIFK (180 aa)) enclose the BPL/LPL catalytic domain. Residues 69–76 (RGGKFTFH), 143–145 (AIG), and 156–158 (GVA) contribute to the substrate site. Cys-174 (acyl-thioester intermediate) is an active-site residue.

The protein belongs to the LipB family.

Its subcellular location is the cytoplasm. The enzyme catalyses octanoyl-[ACP] + L-lysyl-[protein] = N(6)-octanoyl-L-lysyl-[protein] + holo-[ACP] + H(+). The protein operates within protein modification; protein lipoylation via endogenous pathway; protein N(6)-(lipoyl)lysine from octanoyl-[acyl-carrier-protein]: step 1/2. In terms of biological role, catalyzes the transfer of endogenously produced octanoic acid from octanoyl-acyl-carrier-protein onto the lipoyl domains of lipoate-dependent enzymes. Lipoyl-ACP can also act as a substrate although octanoyl-ACP is likely to be the physiological substrate. The chain is Octanoyltransferase from Rickettsia conorii (strain ATCC VR-613 / Malish 7).